A 550-amino-acid chain; its full sequence is Proteasome-associated ATPase (550 aa).

Residues 9-48 (EELARRVASLSAQNERLAQILVEARSKIVGLQQQIDDLAQ) are a coiled coil. ATP is bound at residue 233–238 (GCGKTL). Positions 528 to 550 (KGEGKNPTPAKAIETPHNTGPYL) are disordered. The interval 549 to 550 (YL) is docks into pockets in the proteasome alpha-ring.

The protein belongs to the AAA ATPase family. In terms of assembly, homohexamer. Assembles into a hexameric ring structure that caps the 20S proteasome core. Strongly interacts with the prokaryotic ubiquitin-like protein Pup through a hydrophobic interface; the interacting region of ARC lies in its N-terminal coiled-coil domain. There is one Pup binding site per ARC hexamer ring. Upon ATP-binding, the C-terminus of ARC interacts with the alpha-rings of the proteasome core, possibly by binding to the intersubunit pockets.

Its pathway is protein degradation; proteasomal Pup-dependent pathway. Its function is as follows. ATPase which is responsible for recognizing, binding, unfolding and translocation of pupylated proteins into the bacterial 20S proteasome core particle. May be essential for opening the gate of the 20S proteasome via an interaction with its C-terminus, thereby allowing substrate entry and access to the site of proteolysis. Thus, the C-termini of the proteasomal ATPase may function like a 'key in a lock' to induce gate opening and therefore regulate proteolysis. In Jonesia denitrificans (strain ATCC 14870 / DSM 20603 / BCRC 15368 / CIP 55.134 / JCM 11481 / NBRC 15587 / NCTC 10816 / Prevot 55134) (Listeria denitrificans), this protein is Proteasome-associated ATPase.